Here is a 274-residue protein sequence, read N- to C-terminus: Thymidylate synthase (274 aa).

Arg21 contributes to the dUMP binding site. Position 51 (His51) interacts with (6R)-5,10-methylene-5,6,7,8-tetrahydrofolate. 123–124 (RR) lines the dUMP pocket. The active-site Nucleophile is the Cys156. Residues 176–179 (RSAD), Asn187, and 217–219 (HIY) each bind dUMP. Asp179 serves as a coordination point for (6R)-5,10-methylene-5,6,7,8-tetrahydrofolate. (6R)-5,10-methylene-5,6,7,8-tetrahydrofolate is bound at residue Ser273.

Belongs to the thymidylate synthase family. Bacterial-type ThyA subfamily. In terms of assembly, homodimer.

The protein resides in the cytoplasm. The catalysed reaction is dUMP + (6R)-5,10-methylene-5,6,7,8-tetrahydrofolate = 7,8-dihydrofolate + dTMP. It participates in pyrimidine metabolism; dTTP biosynthesis. Catalyzes the reductive methylation of 2'-deoxyuridine-5'-monophosphate (dUMP) to 2'-deoxythymidine-5'-monophosphate (dTMP) while utilizing 5,10-methylenetetrahydrofolate (mTHF) as the methyl donor and reductant in the reaction, yielding dihydrofolate (DHF) as a by-product. This enzymatic reaction provides an intracellular de novo source of dTMP, an essential precursor for DNA biosynthesis. The chain is Thymidylate synthase from Francisella tularensis subsp. holarctica (strain FTNF002-00 / FTA).